A 515-amino-acid chain; its full sequence is 2-isopropylmalate synthase (515 aa).

The Pyruvate carboxyltransferase domain maps to 4–266 (IKIFDTTLRD…ETGLILKETK (263 aa)). The Mn(2+) site is built by aspartate 13, histidine 201, histidine 203, and asparagine 237. A regulatory domain region spans residues 392–515 (KLIQFGVSYD…ANLTRLVYES (124 aa)).

It belongs to the alpha-IPM synthase/homocitrate synthase family. LeuA type 1 subfamily. Homodimer. Mn(2+) is required as a cofactor.

The protein resides in the cytoplasm. It carries out the reaction 3-methyl-2-oxobutanoate + acetyl-CoA + H2O = (2S)-2-isopropylmalate + CoA + H(+). It participates in amino-acid biosynthesis; L-leucine biosynthesis; L-leucine from 3-methyl-2-oxobutanoate: step 1/4. In terms of biological role, catalyzes the condensation of the acetyl group of acetyl-CoA with 3-methyl-2-oxobutanoate (2-ketoisovalerate) to form 3-carboxy-3-hydroxy-4-methylpentanoate (2-isopropylmalate). The chain is 2-isopropylmalate synthase from Oceanobacillus iheyensis (strain DSM 14371 / CIP 107618 / JCM 11309 / KCTC 3954 / HTE831).